We begin with the raw amino-acid sequence, 211 residues long: ATP phosphoribosyltransferase (211 aa).

This sequence belongs to the ATP phosphoribosyltransferase family. Short subfamily. Heteromultimer composed of HisG and HisZ subunits.

It is found in the cytoplasm. It carries out the reaction 1-(5-phospho-beta-D-ribosyl)-ATP + diphosphate = 5-phospho-alpha-D-ribose 1-diphosphate + ATP. The protein operates within amino-acid biosynthesis; L-histidine biosynthesis; L-histidine from 5-phospho-alpha-D-ribose 1-diphosphate: step 1/9. Functionally, catalyzes the condensation of ATP and 5-phosphoribose 1-diphosphate to form N'-(5'-phosphoribosyl)-ATP (PR-ATP). Has a crucial role in the pathway because the rate of histidine biosynthesis seems to be controlled primarily by regulation of HisG enzymatic activity. The chain is ATP phosphoribosyltransferase from Pseudomonas aeruginosa (strain UCBPP-PA14).